We begin with the raw amino-acid sequence, 597 residues long: ATP-dependent RNA helicase DBP9 (597 aa).

The Q motif motif lies at 17 to 45 (ISFESLQLDTRLLQAIKRNGFKNPTLIQS). One can recognise a Helicase ATP-binding domain in the interval 49–235 (PLALQEKRDI…KEFCRAPAIL (187 aa)). 62–69 (AATGCGKT) is an ATP binding site. The DEAD box signature appears at 181–184 (DEVD). One can recognise a Helicase C-terminal domain in the interval 248–477 (KLIQYYVKTS…PYSFDTKQIE (230 aa)). Residues 340–354 (EEDEENDDEIETNSE) show a composition bias toward acidic residues. Disordered stretches follow at residues 340-373 (EEDE…GKKA), 521-540 (PQEL…RVQQ), and 561-597 (VGFV…KNFK). Basic and acidic residues-rich tracts occupy residues 355-367 (EQDK…DTKD) and 526-535 (SLRHDKELHP). Over residues 568-587 (SVKKSNRHKKNNKVFKKRSG) the composition is skewed to basic residues.

It belongs to the DEAD box helicase family. DDX56/DBP9 subfamily.

Its subcellular location is the nucleus. It is found in the nucleolus. The enzyme catalyses ATP + H2O = ADP + phosphate + H(+). Functionally, ATP-binding RNA helicase involved in the biogenesis of 60S ribosomal subunits and is required for the normal formation of 25S and 5.8S rRNAs. This Vanderwaltozyma polyspora (strain ATCC 22028 / DSM 70294 / BCRC 21397 / CBS 2163 / NBRC 10782 / NRRL Y-8283 / UCD 57-17) (Kluyveromyces polysporus) protein is ATP-dependent RNA helicase DBP9 (DBP9).